Consider the following 238-residue polypeptide: Transcription factor MYB27 (238 aa).

HTH myb-type domains are found at residues 6–58 and 59–113; these read EETL…MNYL and NPTL…RKKQ. The Nuclear localization signal signature appears at 31 to 38; sequence ERRWDSLA. 2 DNA-binding regions (H-T-H motif) span residues 34 to 58 and 86 to 109; these read WDSLAIVSGLKRSGKSCRLRWMNYL and WSKIARRLPGRTDNEIKNYWRTHY.

The protein resides in the nucleus. The protein is Transcription factor MYB27 of Arabidopsis thaliana (Mouse-ear cress).